The chain runs to 842 residues: Envelope glycoprotein H (842 aa).

The signal sequence occupies residues 1–20 (MRRPLCAALLAAAVLALAAG). Topologically, residues 21–802 (APAAARGGAG…AGHEAPTFSP (782 aa)) are virion surface. N-linked (GlcNAc...) asparagine; by host glycosylation is found at Asn77 and Asn112. Residues 240–303 (ERAAARLAVG…AAGPQRRAYV (64 aa)) form an interaction with gL region. N-linked (GlcNAc...) asparagine; by host glycans are attached at residues Asn617, Asn666, Asn760, and Asn783. A helical transmembrane segment spans residues 803–823 (AYVWASVGGALVAGTTIYAIA). Over 824 to 842 (KMLCSSVPLARGYSSVPVF) the chain is Intravirion.

The protein belongs to the herpesviridae glycoprotein H family. As to quaternary structure, interacts with glycoprotein L (gL); this interaction is necessary for the correct processing and cell surface expression of gH. The heterodimer gH/gL seems to interact with gB trimers during fusion. In terms of processing, N-glycosylated, O-glycosylated, and sialylated.

The protein localises to the virion membrane. It localises to the host cell membrane. The protein resides in the host endosome membrane. In terms of biological role, the heterodimer glycoprotein H-glycoprotein L is required for the fusion of viral and plasma membranes leading to virus entry into the host cell. Following initial binding to host receptor, membrane fusion is mediated by the fusion machinery composed of gB and the heterodimer gH/gL. May also be involved in the fusion between the virion envelope and the outer nuclear membrane during virion morphogenesis. In Bos taurus (Bovine), this protein is Envelope glycoprotein H.